The chain runs to 68 residues: Putative membrane protein insertion efficiency factor (68 aa).

Belongs to the UPF0161 family.

It is found in the cell inner membrane. Functionally, could be involved in insertion of integral membrane proteins into the membrane. This Aquifex aeolicus (strain VF5) protein is Putative membrane protein insertion efficiency factor.